The sequence spans 310 residues: MRRISTLYGVVDKQAIFFSEVVIGISFNSILFLFHIFQFLLERRLRITDLIISLLALIHLGMLTVMGFRAVDIFASQNVWNDIKCKSLAHLHRLLRGLSLCATCLLSIFQAITLSPRSSCLAKFKYKSTQHSLCSLLVLWAFYMSCGTHYSFTIVADYNFSSRSLIFVTESCIILPMDYITRHLFFILGIFRDVSFIGLMALSSGYMVALLCRHRKQAQHLHRTSLSPKASPEQRATRTILLLMSFFVLMYCLDCTISASRLMHNGEPIHHSIQMMVSNSYATLSPLLLIVTENRISRFLKSLLGRTVDA.

The Extracellular segment spans residues 1–20; the sequence is MRRISTLYGVVDKQAIFFSE. Residues 21–41 traverse the membrane as a helical segment; it reads VVIGISFNSILFLFHIFQFLL. At 42–46 the chain is on the cytoplasmic side; it reads ERRLR. A helical transmembrane segment spans residues 47 to 67; the sequence is ITDLIISLLALIHLGMLTVMG. The Extracellular segment spans residues 68–93; sequence FRAVDIFASQNVWNDIKCKSLAHLHR. Cys-85 and Cys-172 are oxidised to a cystine. Residues 94-114 traverse the membrane as a helical segment; it reads LLRGLSLCATCLLSIFQAITL. Residues 115–135 are Cytoplasmic-facing; the sequence is SPRSSCLAKFKYKSTQHSLCS. Residues 136–156 form a helical membrane-spanning segment; the sequence is LLVLWAFYMSCGTHYSFTIVA. Residues 157 to 183 are Extracellular-facing; it reads DYNFSSRSLIFVTESCIILPMDYITRH. An N-linked (GlcNAc...) asparagine glycan is attached at Asn-159. Residues 184-204 form a helical membrane-spanning segment; sequence LFFILGIFRDVSFIGLMALSS. Over 205–238 the chain is Cytoplasmic; it reads GYMVALLCRHRKQAQHLHRTSLSPKASPEQRATR. Residues 239-259 traverse the membrane as a helical segment; sequence TILLLMSFFVLMYCLDCTISA. The Extracellular portion of the chain corresponds to 260 to 271; sequence SRLMHNGEPIHH. The helical transmembrane segment at 272–292 threads the bilayer; the sequence is SIQMMVSNSYATLSPLLLIVT. The Cytoplasmic segment spans residues 293 to 310; the sequence is ENRISRFLKSLLGRTVDA.

The protein belongs to the G-protein coupled receptor 1 family. In terms of tissue distribution, expressed in 1-4% of neurons of the vomeronasal organ. Only one pheromone receptor gene may be expressed in a particular neuron. Not expressed in the main olfactory epithelium.

The protein resides in the cell membrane. Functionally, putative pheromone receptor implicated in the regulation of social as well as reproductive behavior. The protein is Vomeronasal type-1 receptor 90 (Vom1r90) of Rattus norvegicus (Rat).